A 220-amino-acid chain; its full sequence is UPF0643 protein PB2B2.08 (220 aa).

Belongs to the UPF0643 family.

The protein localises to the cytoplasm. It is found in the nucleus. This chain is UPF0643 protein PB2B2.08, found in Schizosaccharomyces pombe (strain 972 / ATCC 24843) (Fission yeast).